We begin with the raw amino-acid sequence, 169 residues long: Centrin-1 (169 aa).

An essential for homooligomerization region spans residues 1–21 (MHSRKGASSLPRGRGAGKKTE). Residues 1-25 (MHSRKGASSLPRGRGAGKKTELTEE) are disordered. 4 EF-hand domains span residues 25–60 (EQRQEIKEAFDLFDTDGSGCIDAKELKVAMRALGFE), 61–96 (PKKEEIRKMIADVDKDGTGSVDFQEFLSLMTVKMAE), 98–133 (DPREEILKAFRLFDDDETGKISFKNLKRVSKELGEN), and 134–169 (LTDEELQEMIDEADRDGDGEINEEEFIRIMRKTNLF). Residues Asp38, Asp40, Ser42, Cys44, Glu49, Asp74, Asp76, Thr78, Ser80, and Glu85 each contribute to the Ca(2+) site.

Belongs to the centrin family. In terms of assembly, monomer. Homooligomerizes in a Ca(2+)-dependent manner. Interaction via the C-terminus with other proteins disrupts and/or prevents homooligomerization. Interacts with SFI1.

The protein resides in the cytoplasm. Its subcellular location is the cytoskeleton. It is found in the microtubule organizing center. The protein localises to the centrosome. Its function is as follows. Acts as a calcium sensor. Part of the centrosome outer core complex. This Toxoplasma gondii (strain ATCC 50611 / Me49) protein is Centrin-1.